The chain runs to 266 residues: Phosphatidylglycerol--prolipoprotein diacylglyceryl transferase (266 aa).

A run of 7 helical transmembrane segments spans residues 19–39 (IWGP…FAFA), 61–81 (LMFW…TLFY), 91–111 (LYLF…LGVI), 125–145 (FLQV…FGRI), 176–196 (PSQL…ILWF), 204–224 (GAVS…VEFF), and 237–257 (GMSM…ILMV). A 1,2-diacyl-sn-glycero-3-phospho-(1'-sn-glycerol) is bound at residue Arg144.

The protein belongs to the Lgt family.

The protein resides in the cell inner membrane. It carries out the reaction L-cysteinyl-[prolipoprotein] + a 1,2-diacyl-sn-glycero-3-phospho-(1'-sn-glycerol) = an S-1,2-diacyl-sn-glyceryl-L-cysteinyl-[prolipoprotein] + sn-glycerol 1-phosphate + H(+). It functions in the pathway protein modification; lipoprotein biosynthesis (diacylglyceryl transfer). Its function is as follows. Catalyzes the transfer of the diacylglyceryl group from phosphatidylglycerol to the sulfhydryl group of the N-terminal cysteine of a prolipoprotein, the first step in the formation of mature lipoproteins. This chain is Phosphatidylglycerol--prolipoprotein diacylglyceryl transferase, found in Idiomarina loihiensis (strain ATCC BAA-735 / DSM 15497 / L2-TR).